We begin with the raw amino-acid sequence, 506 residues long: Trans-cinnamate 4-monooxygenase (506 aa).

A helical transmembrane segment spans residues 3–23; the sequence is LLLLEKTLLALFIAATIAVTI. (E)-cinnamate-binding positions include 213 to 218 and alanine 307; that span reads RSRLAQ. Heme is bound at residue cysteine 448.

It belongs to the cytochrome P450 family. The cofactor is heme.

The protein localises to the membrane. The catalysed reaction is (E)-cinnamate + reduced [NADPH--hemoprotein reductase] + O2 = (E)-4-coumarate + oxidized [NADPH--hemoprotein reductase] + H2O + H(+). Its pathway is phenylpropanoid metabolism; trans-4-coumarate biosynthesis; trans-4-coumarate from trans-cinnamate: step 1/1. In terms of biological role, catalyzes the first oxidative step of the phenylpropanoid pathway in higher plants by transforming trans-cinnamate into p-coumarate. The compounds formed by this pathway are essential components for lignification, pollination, and defense against ultraviolet light, predators and pathogens. The sequence is that of Trans-cinnamate 4-monooxygenase (CYP73A3) from Medicago sativa (Alfalfa).